A 191-amino-acid polypeptide reads, in one-letter code: Peptidyl-tRNA hydrolase (191 aa).

Tyr-16 is a tRNA binding site. The active-site Proton acceptor is His-21. The tRNA site is built by Phe-67, Asn-69, and Asn-115.

This sequence belongs to the PTH family. As to quaternary structure, monomer.

Its subcellular location is the cytoplasm. The catalysed reaction is an N-acyl-L-alpha-aminoacyl-tRNA + H2O = an N-acyl-L-amino acid + a tRNA + H(+). Functionally, hydrolyzes ribosome-free peptidyl-tRNAs (with 1 or more amino acids incorporated), which drop off the ribosome during protein synthesis, or as a result of ribosome stalling. Catalyzes the release of premature peptidyl moieties from peptidyl-tRNA molecules trapped in stalled 50S ribosomal subunits, and thus maintains levels of free tRNAs and 50S ribosomes. The polypeptide is Peptidyl-tRNA hydrolase (Ruthia magnifica subsp. Calyptogena magnifica).